A 271-amino-acid polypeptide reads, in one-letter code: Dipeptidyl-peptidase 6 (271 aa).

SH3b domains lie at 1-64 (MNAI…LFDD) and 72-140 (QKAQ…HPKI). The NlpC/P60 domain maps to 148 to 268 (HAFRENVVQT…DLATTITAIG (121 aa)). C178 functions as the Nucleophile in the catalytic mechanism. H224 acts as the Proton acceptor in catalysis. H236 is a catalytic residue.

This sequence belongs to the peptidase C40 family.

Its subcellular location is the cytoplasm. In terms of biological role, involved in cell sporulation. Hydrolyzes gamma-D-Glu-L-(meso)A2pm linkages only in those peptide units that have a free N-terminal L-alanine. This Lysinibacillus sphaericus (Bacillus sphaericus) protein is Dipeptidyl-peptidase 6.